A 277-amino-acid polypeptide reads, in one-letter code: Adaptin ear-binding coat-associated protein 1 (277 aa).

The segment at Gly164–Phe277 is disordered. Over residues Leu187–Ser201 the composition is skewed to pro residues. Position 211 is a phosphothreonine (Thr211). Residues Ser222–Pro234 are compositionally biased toward low complexity. Pro residues predominate over residues Ala235 to Ala245. 2 consecutive short sequence motifs (WXXF motif) follow at residues Trp254 to Phe257 and Trp274 to Phe277. Positions Ser258–Phe277 are enriched in polar residues.

This sequence belongs to the NECAP family. As to quaternary structure, interacts with AP1G1 and AP2A1 components of the adapter protein complexes AP-1 and AP-2. Interacts with the GAE domain proteins GGA1, GGA2 and GGA3. Interacts with AP2A2. As to expression, expressed predominantly in brain (at protein level).

The protein localises to the cytoplasmic vesicle. Its subcellular location is the clathrin-coated vesicle membrane. It localises to the cell membrane. Functionally, involved in endocytosis. The sequence is that of Adaptin ear-binding coat-associated protein 1 (Necap1) from Rattus norvegicus (Rat).